The sequence spans 348 residues: uncharacterized protein (348 aa).

The span at 1 to 11 (MTNPQGPPNDP) shows a compositional bias: pro residues. The segment at 1–83 (MTNPQGPPND…RSGRQAAHQA (83 aa)) is disordered. A run of 2 helical transmembrane segments spans residues 111–131 (LTVFLVLIIVFSLVLAGLIGG) and 235–255 (IPILGAFVTSSVVTHPADGTV).

It localises to the cell membrane. This is an uncharacterized protein from Mycobacterium tuberculosis (strain CDC 1551 / Oshkosh).